The primary structure comprises 279 residues: uncharacterized protein (279 aa).

The disordered stretch occupies residues 1-28; sequence MGLFGGGNSKSTSNQTTNNENTNIATQG. Residues 9–23 show a composition bias toward low complexity; it reads SKSTSNQTTNNENTN. Residues 256-273 traverse the membrane as a helical segment; it reads KTLMIGIVAVSAAVGLYA.

The protein localises to the host membrane. This is an uncharacterized protein from Pseudoalteromonas espejiana (Bacteriophage PM2).